The chain runs to 1157 residues: Nitric oxide synthase, inducible (1157 aa).

The DINNN-motif; mediates interaction with SPSB1, SPSB2 and SPSB4 signature appears at 23–27; it reads DINNN. Positions 29-64 are disordered; it reads EKLRQASSSPVTQDDPKCPSRSRHRNECSQPLAETA. Zn(2+) contacts are provided by Cys110 and Cys115. Cys200 is a heme b binding site. L-arginine is bound by residues Gln263, Trp372, Tyr373, and Glu377. Arg381, Ile462, Trp463, and Phe476 together coordinate (6R)-L-erythro-5,6,7,8-tetrahydrobiopterin. Heme b is bound at residue Tyr491. Positions 515-535 are calmodulin-binding; that stretch reads FKVLVKAVLFAAVLMHKTMAA. The Flavodoxin-like domain maps to 539-677; the sequence is ATILFATETG…AFRGWAVQTF (139 aa). The FMN site is built by Thr545, Glu546, Thr547, Arg549, Ser550, Ser591, Thr592, Ser628, Cys635, Glu661, and Gln665. Positions 730-970 constitute an FAD-binding FR-type domain; sequence KYVFSMRLKS…VRSASGFQLP (241 aa). Residue Arg750 coordinates NADP(+). FAD is bound by residues His772, Arg906, Tyr908, Ser909, Thr924, and Ala926. Thr929 lines the NADP(+) pocket. FAD-binding residues include Tyr930, Val943, Cys944, and Ser945. Residues Thr984, Arg1017, Ser1046, Arg1047, Lys1053, Tyr1055, Gln1057, and Asp1090 each contribute to the NADP(+) site. The interval 1138–1157 is disordered; that stretch reads KEGAVGPPSDPRAPGAHGKS.

The protein belongs to the NOS family. As to quaternary structure, homodimer. Interacts with NHERF1. Interacts with GAPDH; induced by oxidatively-modified low-densitity lipoprotein (LDL(ox)). Interacts with S100A8 and S100A9 to form the iNOS-S100A8/9 transnitrosylase complex. Interacts with SPSB1, SPSB2 and SPSB4. Interacts with ELOC and CUL5 in the presence of SPSB1 or SPSB2 or SPSB4. Forms a complex with ASL, ASS1 and HSP90AA1; the complex regulates cell-autonomous L-arginine synthesis and citrulline recycling while channeling extracellular L-arginine to nitric oxide synthesis pathway. It depends on heme b as a cofactor. FAD is required as a cofactor. The cofactor is FMN. (6R)-L-erythro-5,6,7,8-tetrahydrobiopterin serves as cofactor. In terms of processing, polyubiquitinated; mediated by SPSB1, SPSB2 and SPSB4, leading to proteasomal degradation. In terms of tissue distribution, detected in both stimulated and unstimulated immune cells and macrophages with little or no up-regulation following cellular stimulation with lipopolysaccharides (LPS) or concanavalin A (ConA).

The protein localises to the cytoplasm. The protein resides in the cytosol. It catalyses the reaction 2 L-arginine + 3 NADPH + 4 O2 + H(+) = 2 L-citrulline + 2 nitric oxide + 3 NADP(+) + 4 H2O. Its activity is regulated as follows. Not stimulated by calcium/calmodulin. In terms of biological role, produces nitric oxide (NO) which is a messenger molecule with diverse functions throughout the body. In macrophages, NO mediates tumoricidal and bactericidal actions. Also has nitrosylase activity and mediates cysteine S-nitrosylation of cytoplasmic target proteins such PTGS2/COX2. As component of the iNOS-S100A8/9 transnitrosylase complex involved in the selective inflammatory stimulus-dependent S-nitrosylation of GAPDH implicated in regulation of the GAIT complex activity and probably multiple targets including ANXA5, EZR, MSN and VIM. Involved in inflammation, enhances the synthesis of pro-inflammatory mediators such as IL6 and IL8. The polypeptide is Nitric oxide synthase, inducible (NOS2) (Sus scrofa (Pig)).